Here is a 288-residue protein sequence, read N- to C-terminus: Acetyl-coenzyme A carboxylase carboxyl transferase subunit beta (288 aa).

The 255-residue stretch at 34–288 folds into the CoA carboxyltransferase N-terminal domain; sequence LFAKCPACKH…HLVAFHGGGQ (255 aa). The Zn(2+) site is built by C38, C41, C56, and C59. Residues 38 to 59 form a C4-type zinc finger; the sequence is CPACKHMIYKKDLGLAKICPTC.

The protein belongs to the AccD/PCCB family. In terms of assembly, acetyl-CoA carboxylase is a heterohexamer composed of biotin carboxyl carrier protein (AccB), biotin carboxylase (AccC) and two subunits each of ACCase subunit alpha (AccA) and ACCase subunit beta (AccD). Requires Zn(2+) as cofactor.

The protein localises to the cytoplasm. The catalysed reaction is N(6)-carboxybiotinyl-L-lysyl-[protein] + acetyl-CoA = N(6)-biotinyl-L-lysyl-[protein] + malonyl-CoA. The protein operates within lipid metabolism; malonyl-CoA biosynthesis; malonyl-CoA from acetyl-CoA: step 1/1. Its function is as follows. Component of the acetyl coenzyme A carboxylase (ACC) complex. Biotin carboxylase (BC) catalyzes the carboxylation of biotin on its carrier protein (BCCP) and then the CO(2) group is transferred by the transcarboxylase to acetyl-CoA to form malonyl-CoA. The protein is Acetyl-coenzyme A carboxylase carboxyl transferase subunit beta of Streptococcus pyogenes serotype M28 (strain MGAS6180).